A 499-amino-acid polypeptide reads, in one-letter code: Inosine-5'-monophosphate dehydrogenase (499 aa).

2 consecutive CBS domains span residues 106–165 and 169–225; these read IDRE…SDAV and MTDE…GSAA. NAD(+)-binding positions include Asp260 and 308–310; that span reads GIG. Residues Gly310 and Gly312 each contribute to the K(+) site. Ser313 serves as a coordination point for IMP. Cys315 lines the K(+) pocket. Catalysis depends on Cys315, which acts as the Thioimidate intermediate. IMP is bound by residues 348–350, 371–372, and 395–399; these read DGG, GS, and YRGMG. The active-site Proton acceptor is the Arg411. An IMP-binding site is contributed by Glu425. K(+) is bound by residues Glu479, Gly480, and His481. Residues 480–499 form a disordered region; that stretch reads GHPHDVMITDEAPNYSPQGE.

The protein belongs to the IMPDH/GMPR family. In terms of assembly, homotetramer. The cofactor is K(+).

The enzyme catalyses IMP + NAD(+) + H2O = XMP + NADH + H(+). The protein operates within purine metabolism; XMP biosynthesis via de novo pathway; XMP from IMP: step 1/1. Its activity is regulated as follows. Mycophenolic acid (MPA) is a non-competitive inhibitor that prevents formation of the closed enzyme conformation by binding to the same site as the amobile flap. In contrast, mizoribine monophosphate (MZP) is a competitive inhibitor that induces the closed conformation. MPA is a potent inhibitor of mammalian IMPDHs but a poor inhibitor of the bacterial enzymes. MZP is a more potent inhibitor of bacterial IMPDH. In terms of biological role, catalyzes the conversion of inosine 5'-phosphate (IMP) to xanthosine 5'-phosphate (XMP), the first committed and rate-limiting step in the de novo synthesis of guanine nucleotides, and therefore plays an important role in the regulation of cell growth. This Halobacterium salinarum (strain ATCC 700922 / JCM 11081 / NRC-1) (Halobacterium halobium) protein is Inosine-5'-monophosphate dehydrogenase.